The primary structure comprises 409 residues: Elongation factor 1-gamma (409 aa).

The 80-residue stretch at 2–81 (SVGTVYGKIG…YLASLNKTRA (80 aa)) folds into the GST N-terminal domain. Residues 86 to 212 (TAEEKAKVLQ…EPLKFIDQPL (127 aa)) form the GST C-terminal domain. A compositionally biased stretch (basic and acidic residues) spans 219–248 (NKEAAPAKKAEKKKDEKKKNAPKPQAERPA). Residues 219-261 (NKEAAPAKKAEKKKDEKKKNAPKPQAERPAKPPKHPLASAPNG) form a disordered region. One can recognise an EF-1-gamma C-terminal domain in the interval 251–409 (PKHPLASAPN…REVADGKVCK (159 aa)).

EF-1 is composed of four subunits: alpha, beta, delta, and gamma.

In terms of biological role, probably plays a role in anchoring the complex to other cellular components. The chain is Elongation factor 1-gamma (tef3) from Schizosaccharomyces pombe (strain 972 / ATCC 24843) (Fission yeast).